A 165-amino-acid chain; its full sequence is UPF0303 protein Bcep1808_1522 (165 aa).

Belongs to the UPF0303 family.

This Burkholderia vietnamiensis (strain G4 / LMG 22486) (Burkholderia cepacia (strain R1808)) protein is UPF0303 protein Bcep1808_1522.